A 739-amino-acid polypeptide reads, in one-letter code: Endoglucanase F (739 aa).

Positions 1–27 are cleaved as a signal peptide; the sequence is MKKILAFLLTVALVAVVAIPQAVVSFA. Residues 28-470 form a catalytic region; that stretch reads ADFNYGEALQ…AKMYEKYGGE (443 aa). The active-site Nucleophile is the D84. Active-site residues include H400, D438, and E447. The CBM3 domain maps to 480–639; that stretch reads TPGEEFYVEA…NVRVWGKVPD (160 aa). The 74-residue stretch at 664-737 folds into the Dockerin domain; that stretch reads PGIMLGDVNF…ILKLIEKFPA (74 aa).

This sequence belongs to the glycosyl hydrolase 9 (cellulase E) family. Ca(2+) is required as a cofactor.

It catalyses the reaction Endohydrolysis of (1-&gt;4)-beta-D-glucosidic linkages in cellulose, lichenin and cereal beta-D-glucans.. In terms of biological role, this enzyme catalyzes the endohydrolysis of 1,4-beta-glucosidic linkages in cellulose, lichenin and cereal beta-D-glucans. The protein is Endoglucanase F (celF) of Acetivibrio thermocellus (strain ATCC 27405 / DSM 1237 / JCM 9322 / NBRC 103400 / NCIMB 10682 / NRRL B-4536 / VPI 7372) (Clostridium thermocellum).